An 823-amino-acid chain; its full sequence is Protein Jade-3 (823 aa).

Residues 1–40 (MKRHRPVSSSESSDECPSTSFTSSSMYRKKSKNPKEQKKS) form a disordered region. The segment covering 8-20 (SSSESSDECPSTS) has biased composition (low complexity). An N6-acetyllysine mark is found at K30, K32, and K35. The PHD-type 1 zinc finger occupies 200-250 (DVICDVCRSPDSEEGNDMVFCDKCNVCVHQACYGILKIPEGSWLCRSCVLG). The C2HC pre-PHD-type zinc-finger motif lies at 252-286 (YPQCVLCPKKGGAMKTTRTGTKWAHVSCALWIPEV). The PHD-type 2 zinc-finger motif lies at 310–366 (LVCNLCKLKTGACIQCSVKSCITAFHVTCAFEHGLEMKTILDEGDEVKFKSFCLKHS). Disordered regions lie at residues 543 to 585 (LKMP…PEEP) and 601 to 631 (KSNCLQTSRSHSRCETKSSSPTPRAPSAEFY). A compositionally biased stretch (basic and acidic residues) spans 549–562 (TSEDCKDSSTETEH). A phosphoserine mark is found at S566 and S578. N6-acetyllysine is present on K601. S608 bears the Phosphoserine mark. K638 bears the N6-acetyllysine mark. A disordered region spans residues 651–676 (SIGNGKNQPNSRVSSSNGLEGNWSGN). K735 carries the post-translational modification N6-acetyllysine. Residues 756-823 (TGRASYQETD…HPHSHSSMQR (68 aa)) form a disordered region. S774 and S776 each carry phosphoserine. Over residues 781-809 (EGSKETPRVKRESSDRENPSHDSARECHG) the composition is skewed to basic and acidic residues.

This sequence belongs to the JADE family. As to quaternary structure, component of the HBO1 complex composed at least of ING4 or ING5, MYST2/HBO1, MEAF6, and one of JADE1, JADE2 and JADE3.

Scaffold subunit of some HBO1 complexes, which have a histone H4 acetyltransferase activity. This chain is Protein Jade-3 (Jade3), found in Mus musculus (Mouse).